Consider the following 351-residue polypeptide: Putative F-box protein At4g09790 (351 aa).

The F-box domain maps to 1–51; sequence MTTICDLPRDLVARILSRVPLTSMRRVRFTCKRWNTISKDPSFAKTHFGKA.

The sequence is that of Putative F-box protein At4g09790 from Arabidopsis thaliana (Mouse-ear cress).